Here is a 130-residue protein sequence, read N- to C-terminus: Small ribosomal subunit protein uS9 (130 aa).

It belongs to the universal ribosomal protein uS9 family.

In Janthinobacterium sp. (strain Marseille) (Minibacterium massiliensis), this protein is Small ribosomal subunit protein uS9.